The chain runs to 288 residues: UDP-3-O-acyl-N-acetylglucosamine deacetylase (288 aa).

Zn(2+)-binding residues include H79, H236, and D240. Catalysis depends on H263, which acts as the Proton donor.

This sequence belongs to the LpxC family. The cofactor is Zn(2+).

The catalysed reaction is a UDP-3-O-[(3R)-3-hydroxyacyl]-N-acetyl-alpha-D-glucosamine + H2O = a UDP-3-O-[(3R)-3-hydroxyacyl]-alpha-D-glucosamine + acetate. The protein operates within glycolipid biosynthesis; lipid IV(A) biosynthesis; lipid IV(A) from (3R)-3-hydroxytetradecanoyl-[acyl-carrier-protein] and UDP-N-acetyl-alpha-D-glucosamine: step 2/6. In terms of biological role, catalyzes the hydrolysis of UDP-3-O-myristoyl-N-acetylglucosamine to form UDP-3-O-myristoylglucosamine and acetate, the committed step in lipid A biosynthesis. The sequence is that of UDP-3-O-acyl-N-acetylglucosamine deacetylase from Rickettsia bellii (strain OSU 85-389).